We begin with the raw amino-acid sequence, 64 residues long: Crotamine CRO3 (64 aa).

Positions 1–22 are cleaved as a signal peptide; sequence MILYLLFAFLFLAFLSEPGNAY. 3 cysteine pairs are disulfide-bonded: Cys25-Cys57, Cys32-Cys51, and Cys39-Cys58.

It belongs to the crotamine-myotoxin family. Monomer. Expressed by the venom gland.

The protein resides in the secreted. Functionally, cationic peptide that possesses multiple functions. It acts as a cell-penetrating peptide (CPP), and as a potent voltage-gated potassium channel (Kv) inhibitor. It exhibits antimicrobial activities, hind limb paralysis, and severe muscle necrosis by a non-enzymatic mechanism. The chain is Crotamine CRO3 (CRO3) from Crotalus durissus terrificus (South American rattlesnake).